Consider the following 132-residue polypeptide: Fatty acid-binding protein, intestinal (132 aa).

Residue A2 is modified to N-acetylalanine. Hexadecanoate is bound by residues W83 and R107. Residues W83 and R107 each contribute to the tetradecanoate site.

Belongs to the calycin superfamily. Fatty-acid binding protein (FABP) family. As to expression, expressed in the small intestine. Expression in the mucosal cells of the ileum extends from the midvillar region to the villus tips.

It is found in the cytoplasm. Functionally, FABPs are thought to play a role in the intracellular transport of long-chain fatty acids and their acyl-CoA esters. FABP2 is probably involved in triglyceride-rich lipoprotein synthesis. Binds saturated long-chain fatty acids with a high affinity, but binds with a lower affinity to unsaturated long-chain fatty acids. FABP2 may also help maintain energy homeostasis by functioning as a lipid sensor. This Rattus norvegicus (Rat) protein is Fatty acid-binding protein, intestinal (Fabp2).